Here is a 503-residue protein sequence, read N- to C-terminus: ATP synthase subunit alpha (503 aa).

169–176 lines the ATP pocket; the sequence is GDRGTGKT.

This sequence belongs to the ATPase alpha/beta chains family. In terms of assembly, F-type ATPases have 2 components, CF(1) - the catalytic core - and CF(0) - the membrane proton channel. CF(1) has five subunits: alpha(3), beta(3), gamma(1), delta(1), epsilon(1). CF(0) has three main subunits: a(1), b(2) and c(9-12). The alpha and beta chains form an alternating ring which encloses part of the gamma chain. CF(1) is attached to CF(0) by a central stalk formed by the gamma and epsilon chains, while a peripheral stalk is formed by the delta and b chains.

The protein resides in the cell inner membrane. The enzyme catalyses ATP + H2O + 4 H(+)(in) = ADP + phosphate + 5 H(+)(out). Functionally, produces ATP from ADP in the presence of a proton gradient across the membrane. The alpha chain is a regulatory subunit. In Leptospira interrogans serogroup Icterohaemorrhagiae serovar copenhageni (strain Fiocruz L1-130), this protein is ATP synthase subunit alpha.